A 513-amino-acid chain; its full sequence is Glycerol-3-phosphate dehydrogenase (513 aa).

Residue 16-44 (DVAVIGGGINGVGIAADAAGRGLSVFLCE) participates in FAD binding.

The protein belongs to the FAD-dependent glycerol-3-phosphate dehydrogenase family. Requires FAD as cofactor.

The protein resides in the cytoplasm. It carries out the reaction a quinone + sn-glycerol 3-phosphate = dihydroxyacetone phosphate + a quinol. The chain is Glycerol-3-phosphate dehydrogenase (glpD) from Pseudomonas tolaasii.